Reading from the N-terminus, the 96-residue chain is Large ribosomal subunit protein eL14 (96 aa).

The protein belongs to the eukaryotic ribosomal protein eL14 family.

The polypeptide is Large ribosomal subunit protein eL14 (Saccharolobus islandicus (strain Y.N.15.51 / Yellowstone #2) (Sulfolobus islandicus)).